The primary structure comprises 209 residues: uncharacterized protein (209 aa).

The first 17 residues, 1 to 17, serve as a signal peptide directing secretion; that stretch reads MKRLVTGLLALSLFLAA. The disordered stretch occupies residues 17-105; it reads ACGQDSDQQK…SNNQANNNQK (89 aa). C18 is lipidated: N-palmitoyl cysteine. C18 is lipidated: S-diacylglycerol cysteine. Positions 23–70 are enriched in basic and acidic residues; that stretch reads DQQKDSNKEKDDKAKTEQQDEKTNDSSKDKKDKKDDSKDVNKDNKDNS. Positions 71-105 are enriched in low complexity; sequence ANDNQQQSNSNATNNDQNQTNNNQSSNNQANNNQK.

Its subcellular location is the cell membrane. This is an uncharacterized protein from Staphylococcus aureus (strain bovine RF122 / ET3-1).